A 212-amino-acid chain; its full sequence is Thymidylate kinase (212 aa).

Residue 7–14 (GIEGSGKS) coordinates ATP.

This sequence belongs to the thymidylate kinase family.

The enzyme catalyses dTMP + ATP = dTDP + ADP. In terms of biological role, phosphorylation of dTMP to form dTDP in both de novo and salvage pathways of dTTP synthesis. This is Thymidylate kinase from Oleidesulfovibrio alaskensis (strain ATCC BAA-1058 / DSM 17464 / G20) (Desulfovibrio alaskensis).